Consider the following 39-residue polypeptide: Potassium channel toxin alpha-KTx 2.9 (39 aa).

Cystine bridges form between Cys7–Cys29, Cys13–Cys34, and Cys17–Cys36. Asn39 is modified (asparagine amide).

This sequence belongs to the short scorpion toxin superfamily. Potassium channel inhibitor family. Alpha-KTx 02 subfamily. In terms of tissue distribution, expressed by the venom gland.

Its subcellular location is the secreted. Functionally, blocks Kv1.3/KCNA3 voltage-gated potassium channels of human T-lymphocytes (Kd=0.25 nM). This is Potassium channel toxin alpha-KTx 2.9 from Centruroides elegans (Bark scorpion).